Here is a 439-residue protein sequence, read N- to C-terminus: Potassium/proton antiporter CemA (439 aa).

6 helical membrane passes run 55-75 (IMLYINTNLNNCVFIIYWSLL), 79-99 (ISLFFFDFIKTFVLIISNFFN), 220-240 (YMLFLLFIPWGFSSLLKIWFL), 317-337 (LLHLLTDIVYVITLSAVFILG), 364-384 (ILLLTDLCIGFHSPHGWEIVI), and 399-419 (IISCFVSTFPVILDTVFKYWI).

The protein belongs to the CemA family.

It localises to the plastid. The protein localises to the chloroplast inner membrane. It carries out the reaction K(+)(in) + H(+)(out) = K(+)(out) + H(+)(in). Contributes to K(+)/H(+) antiport activity by supporting proton efflux to control proton extrusion and homeostasis in chloroplasts in a light-dependent manner to modulate photosynthesis. Prevents excessive induction of non-photochemical quenching (NPQ) under continuous-light conditions. Indirectly promotes efficient inorganic carbon uptake into chloroplasts. The protein is Potassium/proton antiporter CemA of Physcomitrium patens (Spreading-leaved earth moss).